The primary structure comprises 408 residues: Inhibin beta B chain (408 aa).

Positions 1–28 (MDGLPGRALGAACLLMLAVGSLGPGVWG) are cleaved as a signal peptide. The disordered stretch occupies residues 29–60 (SPTPPPLPAAPQPPPPPPGAPGGSQDTCTSCG). Residues 29-293 (SPTPPPLPAA…GDSRHRIRKR (265 aa)) constitute a propeptide that is removed on maturation. Pro residues predominate over residues 30–48 (PTPPPLPAAPQPPPPPPGA). N-linked (GlcNAc...) asparagine glycosylation occurs at N94. 4 disulfides stabilise this stretch: C297–C305, C304–C373, C333–C405, and C337–C407.

Belongs to the TGF-beta family. In terms of assembly, dimeric, linked by one or more disulfide bonds. Inhibin B is a dimer of alpha and beta-B. Activin B is a homodimer of beta-B. Activin AB is a dimer of beta-A and beta-B. Interacts with FST and FSTL3.

It is found in the secreted. Inhibins and activins inhibit and activate, respectively, the secretion of follitropin by the pituitary gland. Inhibins/activins are involved in regulating a number of diverse functions such as hypothalamic and pituitary hormone secretion, gonadal hormone secretion, germ cell development and maturation, erythroid differentiation, insulin secretion, nerve cell survival, embryonic axial development or bone growth, depending on their subunit composition. Inhibins appear to oppose the functions of activins. In terms of biological role, activin B is a dimer of alpha and beta-B that plays a role in several essential biological processes including embryonic development, stem cell maintenance and differentiation, haematopoiesis, cell proliferation and wound healing. Signals through type I receptor ACVR1C, abundantly expressed in pancreatic beta cells, and type II receptors like ACVR2A. Upon ligand binding, these receptors phosphorylate intracellular signaling mediators SMAD2 and SMAD3, which form a complex with SMAD4, translocate to the nucleus, and regulate gene expression. Plays a crucial role in the induction of hepcidin by inflammation through activation of ACVR1C and subsequent phosphorylation of SMAD1/5/8. Regulates adipocyte lipid metabolism by decreasing non-esterified fatty acids and glycerol release and increases intracellular triglyceride content. Stimulates wound healing by promoting cell migration and hair follicle regeneration through the JNK and ERK signaling pathways downstream of RHOA. Its function is as follows. Inhibin B is a dimer of alpha and beta-B that plays a crucial role in the regulation of the reproductive system by inhibiting the secretion of follicle-stimulating hormone (FSH) from the anterior pituitary gland. Thereby, maintains reproductive homeostasis in both males and females. Acts as a more potent suppressor of FSH release than inhibin A. Functions as competitive receptor antagonist binding activin type II receptors with high affinity in the presence of the TGF-beta type III coreceptor/TGFBR3L. The chain is Inhibin beta B chain (INHBB) from Bos taurus (Bovine).